A 279-amino-acid polypeptide reads, in one-letter code: Gas vesicle protein L2 (279 aa).

It belongs to the gas vesicle GvpF/GvpL family. GvpF to GvpM interact with each other in vitro, and may form multi-subunit complex(es). Interacts with GvpC, GvpN and GvpO.

It is found in the gas vesicle. Functionally, proteins GvpF to GvpM might be involved in nucleating gas vesicle formation. A minor component of the gas vesicle. Gas vesicles are hollow, gas filled proteinaceous nanostructures found in several microbial planktonic microorganisms. They allow positioning of halobacteria at the optimal depth for growth in the poorly aerated, shallow brine pools of their habitat. In terms of biological role, expression of 2 c-vac DNA fragments containing 2 divergently transcribed regions (gvpE-gvpF-gvpG-gvpH-gvpI-gvpJ-gvpK-gvpL-gvpM and gvpA-gvpC-gvpN-gvpO) allows H.volcanii to produce gas vesicles. The protein is Gas vesicle protein L2 of Halobacterium salinarum (strain ATCC 700922 / JCM 11081 / NRC-1) (Halobacterium halobium).